The following is a 393-amino-acid chain: Putative serpin-Z6A (393 aa).

Residues Gly-336–Arg-360 form an RCL region.

Belongs to the serpin family.

Its function is as follows. Probable serine protease inhibitor. The chain is Putative serpin-Z6A from Oryza sativa subsp. japonica (Rice).